A 489-amino-acid chain; its full sequence is 6-phosphogluconate dehydrogenase, decarboxylating 1 (489 aa).

NADP(+) is bound by residues 9–14 (GLAVMG) and 32–34 (NRT). Residue Ser-50 is modified to Phosphoserine. NADP(+)-binding positions include 74–76 (VKA) and Asn-102. Substrate is bound by residues Asn-102 and 128-130 (SGG). The Proton acceptor role is filled by Lys-182. 185 to 186 (HN) serves as a coordination point for substrate. Residue Glu-189 is the Proton donor of the active site. Substrate-binding residues include Tyr-190, Lys-259, Arg-286, Arg-446, and His-452.

The protein belongs to the 6-phosphogluconate dehydrogenase family. In terms of assembly, homodimer.

The protein localises to the cytoplasm. The enzyme catalyses 6-phospho-D-gluconate + NADP(+) = D-ribulose 5-phosphate + CO2 + NADPH. The protein operates within carbohydrate degradation; pentose phosphate pathway; D-ribulose 5-phosphate from D-glucose 6-phosphate (oxidative stage): step 3/3. Functionally, catalyzes the oxidative decarboxylation of 6-phosphogluconate to ribulose 5-phosphate and CO(2), with concomitant reduction of NADP to NADPH. This is 6-phosphogluconate dehydrogenase, decarboxylating 1 (GND1) from Saccharomyces cerevisiae (strain ATCC 204508 / S288c) (Baker's yeast).